Here is a 336-residue protein sequence, read N- to C-terminus: Nicotinate-nucleotide--dimethylbenzimidazole phosphoribosyltransferase (336 aa).

The active-site Proton acceptor is the Glu-304.

This sequence belongs to the CobT family.

The catalysed reaction is 5,6-dimethylbenzimidazole + nicotinate beta-D-ribonucleotide = alpha-ribazole 5'-phosphate + nicotinate + H(+). It participates in nucleoside biosynthesis; alpha-ribazole biosynthesis; alpha-ribazole from 5,6-dimethylbenzimidazole: step 1/2. In terms of biological role, catalyzes the synthesis of alpha-ribazole-5'-phosphate from nicotinate mononucleotide (NAMN) and 5,6-dimethylbenzimidazole (DMB). In Ruegeria sp. (strain TM1040) (Silicibacter sp.), this protein is Nicotinate-nucleotide--dimethylbenzimidazole phosphoribosyltransferase.